The sequence spans 94 residues: Neurotoxin 213 (94 aa).

Residues 1–22 form the signal peptide; the sequence is MLKFILTCTSVILFTAVEDSSC. The 65-residue stretch at 24 to 88 folds into the LCN-type CS-alpha/beta domain; the sequence is KGGNYPISVY…YWDYHRNNCK (65 aa). Cystine bridges form between Cys-39–Cys-62, Cys-48–Cys-67, and Cys-52–Cys-69.

It belongs to the long (3 C-C) scorpion toxin superfamily. Expressed by the venom gland.

It is found in the secreted. In Lychas mucronatus (Chinese swimming scorpion), this protein is Neurotoxin 213.